The sequence spans 359 residues: GTPase Obg (359 aa).

In terms of domain architecture, Obg spans 1-159 (MQFIDQAEIQ…RSLRLELKLL (159 aa)). Residues 160–328 (AEVGIIGLPN…LLHQIWQELE (169 aa)) enclose the OBG-type G domain. GTP-binding positions include 166–173 (GLPNAGKS), 191–195 (FTTLV), 213–216 (DIPG), 280–283 (NKID), and 309–311 (SAI). 2 residues coordinate Mg(2+): serine 173 and threonine 193.

It belongs to the TRAFAC class OBG-HflX-like GTPase superfamily. OBG GTPase family. In terms of assembly, monomer. Mg(2+) serves as cofactor.

The protein localises to the cytoplasm. Its function is as follows. An essential GTPase which binds GTP, GDP and possibly (p)ppGpp with moderate affinity, with high nucleotide exchange rates and a fairly low GTP hydrolysis rate. Plays a role in control of the cell cycle, stress response, ribosome biogenesis and in those bacteria that undergo differentiation, in morphogenesis control. The polypeptide is GTPase Obg (Cyanothece sp. (strain PCC 7425 / ATCC 29141)).